The primary structure comprises 386 residues: V-type proton ATPase subunit B 2 (386 aa).

It belongs to the ATPase alpha/beta chains family. In terms of assembly, V-ATPase is a heteromultimeric enzyme composed of a peripheral catalytic V1 complex (main components: subunits A, B, C, D, E, and F) attached to an integral membrane V0 proton pore complex (main component: the proteolipid protein).

Non-catalytic subunit of the peripheral V1 complex of vacuolar ATPase. V-ATPase is responsible for acidifying a variety of intracellular compartments in eukaryotic cells. The polypeptide is V-type proton ATPase subunit B 2 (Gossypium hirsutum (Upland cotton)).